The sequence spans 166 residues: Small ribosomal subunit protein uS5 (166 aa).

Positions 11-74 constitute an S5 DRBM domain; that stretch reads LQEKLIAVNR…EKARRNMMNV (64 aa).

It belongs to the universal ribosomal protein uS5 family. In terms of assembly, part of the 30S ribosomal subunit. Contacts proteins S4 and S8.

Functionally, with S4 and S12 plays an important role in translational accuracy. Located at the back of the 30S subunit body where it stabilizes the conformation of the head with respect to the body. The sequence is that of Small ribosomal subunit protein uS5 from Buchnera aphidicola subsp. Acyrthosiphon kondoi (Acyrthosiphon kondoi symbiotic bacterium).